A 507-amino-acid chain; its full sequence is Maturase K (507 aa).

It belongs to the intron maturase 2 family. MatK subfamily.

The protein resides in the plastid. Its subcellular location is the chloroplast. Functionally, usually encoded in the trnK tRNA gene intron. Probably assists in splicing its own and other chloroplast group II introns. The sequence is that of Maturase K from Magnolia champaca (Yellow jade orchid tree).